Consider the following 94-residue polypeptide: Pyrimidine/purine nucleoside phosphorylase (94 aa).

It belongs to the nucleoside phosphorylase PpnP family.

It catalyses the reaction a purine D-ribonucleoside + phosphate = a purine nucleobase + alpha-D-ribose 1-phosphate. The enzyme catalyses adenosine + phosphate = alpha-D-ribose 1-phosphate + adenine. The catalysed reaction is cytidine + phosphate = cytosine + alpha-D-ribose 1-phosphate. It carries out the reaction guanosine + phosphate = alpha-D-ribose 1-phosphate + guanine. It catalyses the reaction inosine + phosphate = alpha-D-ribose 1-phosphate + hypoxanthine. The enzyme catalyses thymidine + phosphate = 2-deoxy-alpha-D-ribose 1-phosphate + thymine. The catalysed reaction is uridine + phosphate = alpha-D-ribose 1-phosphate + uracil. It carries out the reaction xanthosine + phosphate = alpha-D-ribose 1-phosphate + xanthine. Functionally, catalyzes the phosphorolysis of diverse nucleosides, yielding D-ribose 1-phosphate and the respective free bases. Can use uridine, adenosine, guanosine, cytidine, thymidine, inosine and xanthosine as substrates. Also catalyzes the reverse reactions. This is Pyrimidine/purine nucleoside phosphorylase from Salmonella agona (strain SL483).